The chain runs to 353 residues: DNA integrity scanning protein DisA (353 aa).

Residues 6–144 (DKELMNILKI…GGIKYVLRDS (139 aa)) form the DAC domain. ATP contacts are provided by residues Gly-73, Leu-91, and 104–108 (TRHRT).

It belongs to the DisA family. As to quaternary structure, homooctamer. Mg(2+) serves as cofactor.

The catalysed reaction is 2 ATP = 3',3'-c-di-AMP + 2 diphosphate. In terms of biological role, participates in a DNA-damage check-point that is active prior to asymmetric division when DNA is damaged. DisA forms globular foci that rapidly scan along the chromosomes during sporulation, searching for lesions. When a lesion is present, DisA pauses at the lesion site. This triggers a cellular response that culminates in a temporary block in sporulation initiation. Functionally, also has diadenylate cyclase activity, catalyzing the condensation of 2 ATP molecules into cyclic di-AMP (c-di-AMP). c-di-AMP acts as a signaling molecule that couples DNA integrity with progression of sporulation. The rise in c-di-AMP level generated by DisA while scanning the chromosome, operates as a positive signal that advances sporulation; upon encountering a lesion, the DisA focus arrests at the damaged site and halts c-di-AMP synthesis. This Clostridium botulinum (strain 657 / Type Ba4) protein is DNA integrity scanning protein DisA.